We begin with the raw amino-acid sequence, 738 residues long: Phosphoribosylformylglycinamidine synthase subunit PurL (738 aa).

His53 is an active-site residue. Residues Tyr56 and Lys95 each contribute to the ATP site. Position 97 (Glu97) interacts with Mg(2+). Substrate contacts are provided by residues Ser98 to His101 and Arg120. The active-site Proton acceptor is the His99. Mg(2+) is bound at residue Asp121. Substrate is bound at residue Gln244. Residue Asp274 coordinates Mg(2+). Glu318–Gln320 contributes to the substrate binding site. Asp499 and Gly536 together coordinate ATP. Position 537 (Asn537) interacts with Mg(2+). Ser539 contributes to the substrate binding site.

The protein belongs to the FGAMS family. In terms of assembly, monomer. Part of the FGAM synthase complex composed of 1 PurL, 1 PurQ and 2 PurS subunits.

The protein localises to the cytoplasm. It carries out the reaction N(2)-formyl-N(1)-(5-phospho-beta-D-ribosyl)glycinamide + L-glutamine + ATP + H2O = 2-formamido-N(1)-(5-O-phospho-beta-D-ribosyl)acetamidine + L-glutamate + ADP + phosphate + H(+). The protein operates within purine metabolism; IMP biosynthesis via de novo pathway; 5-amino-1-(5-phospho-D-ribosyl)imidazole from N(2)-formyl-N(1)-(5-phospho-D-ribosyl)glycinamide: step 1/2. Part of the phosphoribosylformylglycinamidine synthase complex involved in the purines biosynthetic pathway. Catalyzes the ATP-dependent conversion of formylglycinamide ribonucleotide (FGAR) and glutamine to yield formylglycinamidine ribonucleotide (FGAM) and glutamate. The FGAM synthase complex is composed of three subunits. PurQ produces an ammonia molecule by converting glutamine to glutamate. PurL transfers the ammonia molecule to FGAR to form FGAM in an ATP-dependent manner. PurS interacts with PurQ and PurL and is thought to assist in the transfer of the ammonia molecule from PurQ to PurL. The polypeptide is Phosphoribosylformylglycinamidine synthase subunit PurL (Lacticaseibacillus paracasei (strain ATCC 334 / BCRC 17002 / CCUG 31169 / CIP 107868 / KCTC 3260 / NRRL B-441) (Lactobacillus paracasei)).